An 815-amino-acid chain; its full sequence is SNF1 protein kinase subunit beta-1 (815 aa).

Polar residues predominate over residues 1 to 11 (MGNSPSTQDPS). Disordered regions lie at residues 1-88 (MGNS…TIDK) and 120-146 (HDVG…TVKR). Glycine 2 is lipidated: N-myristoyl glycine. Basic and acidic residues predominate over residues 12–31 (HSTKKEHGHHFHDAFNKDRQ). The span at 32–42 (GSITSQLFNNR) shows a compositional bias: polar residues. Residue serine 33 is modified to Phosphoserine. Basic and acidic residues-rich tracts occupy residues 72–88 (PSTD…TIDK) and 120–129 (HDVGAPEEQV). Phosphoserine is present on residues serine 181, serine 198, serine 200, serine 206, serine 209, and serine 220. Disordered regions lie at residues 311 to 335 (HANN…NDDF), 363 to 389 (HHNK…FASL), and 410 to 444 (PLHP…SSIS). Positions 313-326 (NNNGNIENNTRNKG) are enriched in low complexity. Phosphoserine is present on serine 331. Residues 363–376 (HHNKTKKAQSKKIR) are compositionally biased toward basic residues. Composition is skewed to low complexity over residues 377 to 389 (SASN…FASL) and 433 to 444 (HSNSMSSMSSIS). Positions 473-716 (VSTDIASALK…LQQGGNIDAE (244 aa)) are kinase-interacting sequence (KIS); required for interaction with SNF1. 2 positions are modified to phosphoserine: serine 494 and serine 497. The disordered stretch occupies residues 581-616 (EPTLDEELPKRPELKRFPSSSRKSSYYSAKGVERPS). The segment covering 587–596 (ELPKRPELKR) has biased composition (basic and acidic residues). Residues 599–608 (SSSRKSSYYS) are compositionally biased toward low complexity. Serine 643 carries the phosphoserine modification. Positions 724-804 (SRYPVPDLPI…FITQVVYAPC (81 aa)) are association with SNF1 kinase complex (ASC) domain; required for interaction with SNF4.

Belongs to the 5'-AMP-activated protein kinase beta subunit family. In terms of assembly, component of the SNF1 kinase complex, a heterotrimeric complex composed of the catalytic alpha subunit SNF1, one of the three related beta subunits SIP1, SIP2 or GAL83, and the regulatory gamma subunit SNF4. The beta subunit serves as a bridge between the catalytic and the regulatory subunit. Interacts (via KIS domain) with SNF1. Interacts (via ASC domain) with SNF4. In terms of processing, phosphorylated by SNF1 in vitro.

The protein resides in the cytoplasm. The protein localises to the vacuole membrane. Its function is as follows. Beta subunit of the SNF1 kinase complex, which is required for transcriptional, metabolic, and developmental adaptations in response to glucose limitation. Has a structural role, mediating heterotrimer formation, and a regulatory role, defining carbon source-regulated subcellular location and substrate specificity of the SNF1 kinase complex. Promotes the PKA-regulated relocalization of the SNF1 kinase complex to the vacuolar membrane in response to various types of carbon stress. In Saccharomyces cerevisiae (strain RM11-1a) (Baker's yeast), this protein is SNF1 protein kinase subunit beta-1 (SIP1).